A 365-amino-acid chain; its full sequence is Phosphate acyltransferase (365 aa).

It belongs to the PlsX family. As to quaternary structure, homodimer. Probably interacts with PlsY.

The protein localises to the cytoplasm. It catalyses the reaction a fatty acyl-[ACP] + phosphate = an acyl phosphate + holo-[ACP]. The protein operates within lipid metabolism; phospholipid metabolism. Functionally, catalyzes the reversible formation of acyl-phosphate (acyl-PO(4)) from acyl-[acyl-carrier-protein] (acyl-ACP). This enzyme utilizes acyl-ACP as fatty acyl donor, but not acyl-CoA. The sequence is that of Phosphate acyltransferase from Jannaschia sp. (strain CCS1).